The primary structure comprises 382 residues: uncharacterized protein (382 aa).

10 helical membrane passes run 8-28 (VLLLLCGLLLFTISIAVLNTL), 41-61 (WQVGMVSSSYFTGNLVGTLIA), 73-93 (SYHCSCILFALATCGLMLTVD), 94-114 (FWSWLGWRFLAGIACALIWVI), 133-153 (AAYMMVYYLGTVIGQLLLGIV), 157-177 (LLSVIPWVGALVITAMLPLLF), 208-228 (GCIISGVLLGSLYGLLPLYLS), 274-294 (VVILGSVAILGNYAMAPALFI), 325-345 (ALLMSYTLGSLAGPTMTSLLM), and 349-369 (SDNLLFIMIAGVAFVYLMMLL).

Belongs to the major facilitator superfamily. YcaD (TC 2.A.1.26) family.

It is found in the cell inner membrane. This is an uncharacterized protein from Yersinia pseudotuberculosis serotype O:3 (strain YPIII).